A 286-amino-acid chain; its full sequence is Formamidopyrimidine-DNA glycosylase (286 aa).

Pro2 serves as the catalytic Schiff-base intermediate with DNA. The active-site Proton donor is the Glu3. Lys60 acts as the Proton donor; for beta-elimination activity in catalysis. DNA-binding residues include His103, Arg122, and Arg167. An FPG-type zinc finger spans residues 252–286 (WVYRRNQKPCRKCGTLIEKTKVAGRSTHWCPNCQN). Arg276 serves as the catalytic Proton donor; for delta-elimination activity.

Belongs to the FPG family. Monomer. The cofactor is Zn(2+).

The enzyme catalyses Hydrolysis of DNA containing ring-opened 7-methylguanine residues, releasing 2,6-diamino-4-hydroxy-5-(N-methyl)formamidopyrimidine.. It catalyses the reaction 2'-deoxyribonucleotide-(2'-deoxyribose 5'-phosphate)-2'-deoxyribonucleotide-DNA = a 3'-end 2'-deoxyribonucleotide-(2,3-dehydro-2,3-deoxyribose 5'-phosphate)-DNA + a 5'-end 5'-phospho-2'-deoxyribonucleoside-DNA + H(+). Involved in base excision repair of DNA damaged by oxidation or by mutagenic agents. Acts as a DNA glycosylase that recognizes and removes damaged bases. Has a preference for oxidized purines, such as 7,8-dihydro-8-oxoguanine (8-oxoG). Has AP (apurinic/apyrimidinic) lyase activity and introduces nicks in the DNA strand. Cleaves the DNA backbone by beta-delta elimination to generate a single-strand break at the site of the removed base with both 3'- and 5'-phosphates. The chain is Formamidopyrimidine-DNA glycosylase from Prochlorococcus marinus (strain MIT 9211).